Here is a 347-residue protein sequence, read N- to C-terminus: MIKRAITGIQASGRQHLGNFLGVMQGLKQLQSQYQLFLFVADLHAITVDFEPTMLKDNNLQLVKTLLALGLDYGKVNLFLQSDLMEHTMLGYLMLTQSNLGELQRMTQFKTKKLAQKRNSNNTITIPTGLLTYPVLMAADILLYQPDIVPVGNDQKQHLELTNDLAKRVAKKFKLKLKLPVFIENKDTNRIMDLSNPLKKMSKSNPDQNGVIYLDDSKETIIKKVRKATTDSFNKIRFAKKTQPGVTNLLVILTALLKEEVNHNLSKKIGSDLVKYYQNKSYLDLKNDLSSAVINVIESLKFKKAQITDEMVLKVLNDGKNQAKKVADETLKMFYKAFGLTSNQLFD.

ATP is bound by residues 10-12 (QAS) and 18-19 (GN). The 'HIGH' region motif lies at 11–19 (ASGRQHLGN). Residue Asp140 coordinates L-tryptophan. ATP contacts are provided by residues 152-154 (GND), Ile191, and 200-204 (KMSKS). The short motif at 200–204 (KMSKS) is the 'KMSKS' region element.

This sequence belongs to the class-I aminoacyl-tRNA synthetase family. In terms of assembly, homodimer.

It is found in the cytoplasm. The enzyme catalyses tRNA(Trp) + L-tryptophan + ATP = L-tryptophyl-tRNA(Trp) + AMP + diphosphate + H(+). Catalyzes the attachment of tryptophan to tRNA(Trp). This chain is Tryptophan--tRNA ligase, found in Mycoplasma genitalium (strain ATCC 33530 / DSM 19775 / NCTC 10195 / G37) (Mycoplasmoides genitalium).